A 637-amino-acid polypeptide reads, in one-letter code: Threonine--tRNA ligase (637 aa).

Residues 1–61 (MLNITLPDCS…VEDSAVQIIT (61 aa)) form the TGS domain. Residues 242–533 (DHRKLGKQLD…LIENHAGSFP (292 aa)) form a catalytic region. Cys333, His384, and His510 together coordinate Zn(2+).

This sequence belongs to the class-II aminoacyl-tRNA synthetase family. As to quaternary structure, homodimer. It depends on Zn(2+) as a cofactor.

It is found in the cytoplasm. It carries out the reaction tRNA(Thr) + L-threonine + ATP = L-threonyl-tRNA(Thr) + AMP + diphosphate + H(+). In terms of biological role, catalyzes the attachment of threonine to tRNA(Thr) in a two-step reaction: L-threonine is first activated by ATP to form Thr-AMP and then transferred to the acceptor end of tRNA(Thr). Also edits incorrectly charged L-seryl-tRNA(Thr). This is Threonine--tRNA ligase from Neisseria gonorrhoeae (strain ATCC 700825 / FA 1090).